The primary structure comprises 347 residues: Phosphoribosylformylglycinamidine cyclo-ligase (347 aa).

Belongs to the AIR synthase family.

It is found in the cytoplasm. The enzyme catalyses 2-formamido-N(1)-(5-O-phospho-beta-D-ribosyl)acetamidine + ATP = 5-amino-1-(5-phospho-beta-D-ribosyl)imidazole + ADP + phosphate + H(+). It participates in purine metabolism; IMP biosynthesis via de novo pathway; 5-amino-1-(5-phospho-D-ribosyl)imidazole from N(2)-formyl-N(1)-(5-phospho-D-ribosyl)glycinamide: step 2/2. This chain is Phosphoribosylformylglycinamidine cyclo-ligase, found in Yersinia pestis.